A 416-amino-acid polypeptide reads, in one-letter code: E3 ubiquitin-protein ligase makorin-2 (416 aa).

2 consecutive C3H1-type zinc fingers follow at residues 2–29 (STKQ…HDLA) and 31–58 (SKPS…HTKP). The segment at 61-144 (AAGGAVGPAP…DPQTSPEMKP (84 aa)) is disordered. Over residues 95 to 123 (HSNEPGKREKKTLVLRDRNLTGLAEDKTP) the composition is skewed to basic and acidic residues. Phosphoserine is present on Ser-139. The C3H1-type 3 zinc-finger motif lies at 165–192 (SNEPQLCPYAAAGECRFGDACVYLHGDM). A makorin-type Cys-His region spans residues 193–222 (CEICRLQVLHPFDPEQRKAHEKMCMSTFEH). An RING-type zinc finger spans residues 238-292 (CSICMEVILEKASASERRFGILSNCSHTYCLSCIRQWRCAKQFENPIIKSCPECR). Residues 321–350 (GMGKKACKYFEQGKGTCPFGSKCLYRHAYP) form a C3H1-type 4 zinc finger.

In terms of assembly, interacts with PDLIM2 (via LIM zinc-binding domain). Interacts with RELA. As to expression, highly expressed in the testis, and lower expression in the brain, thymus, heart, lung, liver, spleen, kidney, ovary, uterus, and seminal vesicle (at protein level). Expressed in primary immune cells, such as CD4-positive and CD8-positive T cells, CD19-positive B cells and CD11c-positive dendritic cells, and in embryonic fibroblasts (at protein level).

It localises to the cytoplasm. It is found in the nucleus. The catalysed reaction is S-ubiquitinyl-[E2 ubiquitin-conjugating enzyme]-L-cysteine + [acceptor protein]-L-lysine = [E2 ubiquitin-conjugating enzyme]-L-cysteine + N(6)-ubiquitinyl-[acceptor protein]-L-lysine.. It participates in protein modification; protein ubiquitination. In terms of biological role, E3 ubiquitin ligase catalyzing the covalent attachment of ubiquitin moieties onto substrate proteins. Promotes the polyubiquitination and proteasome-dependent degradation of RELA/p65, thereby suppressing RELA-mediated NF-kappa-B transactivation and negatively regulating inflammatory responses. Plays a role in the regulation of spermiation and in male fertility. The chain is E3 ubiquitin-protein ligase makorin-2 (Mkrn2) from Mus musculus (Mouse).